Here is a 1829-residue protein sequence, read N- to C-terminus: Afadin (1829 aa).

Residues 39–133 enclose the Ras-associating 1 domain; sequence FHGVMRFYFQ…GRFVLKNEND (95 aa). Residues 129–196 form a disordered region; it reads KNENDAIPAK…PSQGDDSENS (68 aa). Residues 146–186 are a coiled coil; sequence EKQEKEGVIQNFKRTLSKKEKKEKKKREKEALRQASDKEER. Positions 160–172 are enriched in basic residues; the sequence is TLSKKEKKEKKKR. The segment covering 173–189 has biased composition (basic and acidic residues); the sequence is EKEALRQASDKEERPSQ. 3 positions are modified to phosphoserine: S216, S246, and S256. Residues 246-348 enclose the Ras-associating 2 domain; that stretch reads SGGTLRIYAD…LVFQLKRRPP (103 aa). Basic and acidic residues predominate over residues 356–371; sequence KKHVEGKPLKGKDRAD. Residues 356-377 are disordered; the sequence is KKHVEGKPLKGKDRADGSGYGS. Phosphoserine is present on residues S391 and S424. The FHA domain occupies 441–507; it reads FGPGIQPHHC…KFVDPIQDHV (67 aa). 5 positions are modified to phosphoserine: S512, S557, S562, S589, and S655. The interval 539 to 595 is disordered; that stretch reads DIHSGTALPASRSTTRLDSDRVSSASSTAERGMVKPMIRLDQEQDYRRRESRTQDAA. A compositionally biased stretch (basic and acidic residues) spans 576–591; that stretch reads IRLDQEQDYRRRESRT. One can recognise a Dilute domain in the interval 668–915; the sequence is NKMVSMMEGV…IENVVAVAEN (248 aa). One can recognise a PDZ domain in the interval 1014 to 1100; sequence VITVTLKKQN…VVTLEVAKQG (87 aa). 9 positions are modified to phosphoserine: S1090, S1114, S1133, S1147, S1150, S1179, S1180, S1189, and S1206. The interval 1114 to 1230 is disordered; sequence SPMMQRISDR…PRPEAYPIPT (117 aa). Residues 1120–1135 show a composition bias toward basic and acidic residues; it reads ISDRRGSGKPRPKSEG. The segment covering 1139-1150 has biased composition (polar residues); that stretch reads YNNSAQNGSPES. Residues 1159–1179 show a composition bias toward basic and acidic residues; sequence SEPKKLPGDDRLMKNRADHRS. Positions 1195 to 1217 are enriched in polar residues; that stretch reads PYTSGTAAKITSVSTGNLCTEEQ. Phosphothreonine is present on residues T1218 and T1239. A phosphoserine mark is found at S1245 and S1282. The span at 1300–1309 shows a compositional bias: basic and acidic residues; sequence ESGMDRKCDS. Disordered stretches follow at residues 1300 to 1533 and 1574 to 1724; these read ESGM…EKQQ and RLQE…KTQV. The segment covering 1316-1325 has biased composition (low complexity); sequence SSSVESSTSS. Residues 1332–1344 show a composition bias toward polar residues; that stretch reads SSKSVTPASTLTK. A Phosphoserine modification is found at S1335. Phosphothreonine is present on T1337. Over residues 1371 to 1380 the composition is skewed to pro residues; the sequence is LPPPPPPPPA. The segment covering 1401-1412 has biased composition (low complexity); sequence NQAAPQSAQVAA. Positions 1413-1447 are enriched in basic and acidic residues; it reads AERKKREEHQRWYEKEKARLEEERERKRREQERKL. Residues 1417–1454 are a coiled coil; the sequence is KREEHQRWYEKEKARLEEERERKRREQERKLGQMRTQS. Polar residues predominate over residues 1450–1464; it reads MRTQSLNPASFSPLA. Positions 1494-1510 are enriched in basic and acidic residues; the sequence is TIERRDLQYITISKEEL. Phosphoserine is present on residues S1506 and S1517. Residues 1520–1533 show a composition bias toward basic and acidic residues; the sequence is PWKRDAREKLEKQQ. Positions 1530–1564 form a coiled coil; sequence EKQQQMHIVDMLSKEIHELQNKGDRTAEESDRLRK. A compositionally biased stretch (acidic residues) spans 1583–1594; sequence EDDDEEEDDDVD. Residues 1600–1672 are a coiled coil; the sequence is QRLEAERRAR…SRLEAERRRQ (73 aa). A compositionally biased stretch (basic and acidic residues) spans 1602 to 1682; it reads LEAERRARLQ…HEEAARRLLE (81 aa). S1701 carries the phosphoserine modification. The segment covering 1715 to 1724 has biased composition (polar residues); that stretch reads RNASYLKTQV. S1726 carries the phosphoserine modification. Residues 1742-1829 form a disordered region; that stretch reads DEEENYVPAG…TELENELNTK (88 aa). Positions 1753 to 1764 are enriched in polar residues; the sequence is NSYSGSAGTTAG. A compositionally biased stretch (basic and acidic residues) spans 1768 to 1781; sequence APRDTREKLSRSQD. A phosphoserine mark is found at S1779 and S1804. The span at 1809 to 1829 shows a compositional bias: basic and acidic residues; the sequence is VSDKVKASRKLTELENELNTK. An N6-acetyllysine modification is found at K1812.

As to quaternary structure, homodimer. Interacts with F-actin, nectin and NECTIN3. Essential for the association of nectin and E-cadherin. Isoform 2/s-afadin does not interact with F-actin. Interacts with ZO-1 and occludin, but probably in an indirect manner. Interacts with RIT1, RIT2, NRXN1 and BCR. Interacts with ADAM10; the interaction locks ADAM10 at adherens junctions following ADAM10 recruitment to adherens junctions by TSPAN33. Isoform 1 is widely expressed, including in heart, brain, spleen, lung, liver, skeletal muscle, kidney and testis. Isoform 2 is mainly expressed in the brain.

It localises to the cell junction. Its subcellular location is the adherens junction. Its function is as follows. Belongs to an adhesion system, probably together with the E-cadherin-catenin system, which plays a role in the organization of homotypic, interneuronal and heterotypic cell-cell adherens junctions (AJs). Nectin- and actin-filament-binding protein that connects nectin to the actin cytoskeleton. May play a key role in the organization of epithelial structures of the embryonic ectoderm. Essential for the organization of adherens junctions. The chain is Afadin from Rattus norvegicus (Rat).